The following is a 33-amino-acid chain: Cytochrome b6-f complex subunit 8 (33 aa).

A helical membrane pass occupies residues 2–22; it reads IFQIGWAALAAIFTFSIAMVV.

It belongs to the PetN family. In terms of assembly, the 4 large subunits of the cytochrome b6-f complex are cytochrome b6, subunit IV (17 kDa polypeptide, PetD), cytochrome f and the Rieske protein, while the 4 small subunits are PetG, PetL, PetM and PetN. The complex functions as a dimer.

The protein resides in the cellular thylakoid membrane. Component of the cytochrome b6-f complex, which mediates electron transfer between photosystem II (PSII) and photosystem I (PSI), cyclic electron flow around PSI, and state transitions. The sequence is that of Cytochrome b6-f complex subunit 8 from Prochlorococcus marinus (strain MIT 9301).